Consider the following 485-residue polypeptide: Eukaryotic translation initiation factor 3 subunit E (485 aa).

The region spanning 219 to 391 is the PCI domain; the sequence is NQPDGPDGIV…GEIHITKPVT (173 aa). The tract at residues 444-485 is disordered; sequence QGGGKSNKKGDYKKGDYKKGGDFKKGGDFKKGGDHKKRAWVK. Residues 451–475 show a composition bias toward basic and acidic residues; sequence KKGDYKKGDYKKGGDFKKGGDFKKG. Positions 476–485 are enriched in basic residues; sequence GDHKKRAWVK.

It belongs to the eIF-3 subunit E family. As to quaternary structure, component of the eukaryotic translation initiation factor 3 (eIF-3) complex.

Its subcellular location is the cytoplasm. Its function is as follows. Component of the eukaryotic translation initiation factor 3 (eIF-3) complex, which is involved in protein synthesis of a specialized repertoire of mRNAs and, together with other initiation factors, stimulates binding of mRNA and methionyl-tRNAi to the 40S ribosome. The eIF-3 complex specifically targets and initiates translation of a subset of mRNAs involved in cell proliferation. This chain is Eukaryotic translation initiation factor 3 subunit E, found in Monosiga brevicollis (Choanoflagellate).